The following is a 263-amino-acid chain: MFGRLYFMLLLSVGLVDCLSVVKDCITNNGEDYRGTQQKTSSGSTCLSWRSLNLKFKDSQTGVGDHNFCRNPDGSNKPWCYVSGSSGETKKEACDIRICQDQNATEAPAPEESVPTQGLTQRMVETFEPANSFPSQVEGAAVQPVKGVRQQVRSGPKKKKDLGTLGYVLAVFMMAIIILLGGGITMGYFYKRGRDLKKQHEQRVYEREMHRITLPLSAFANPTCELVDENTIVITAEPNNQTPTQEPVEGADPLMGSAGTPGA.

Positions 1–18 (MFGRLYFMLLLSVGLVDC) are cleaved as a signal peptide. The Extracellular segment spans residues 19–163 (LSVVKDCITN…SGPKKKKDLG (145 aa)). A Kringle domain is found at 24-99 (DCITNNGEDY…KKEACDIRIC (76 aa)). Disulfide bonds link cysteine 25-cysteine 99, cysteine 46-cysteine 80, and cysteine 69-cysteine 94. N-linked (GlcNAc...) asparagine glycosylation is present at asparagine 103. A helical membrane pass occupies residues 164–184 (TLGYVLAVFMMAIIILLGGGI). At 185–263 (TMGYFYKRGR…LMGSAGTPGA (79 aa)) the chain is on the cytoplasmic side. Positions 239-263 (NNQTPTQEPVEGADPLMGSAGTPGA) are disordered.

The protein resides in the cell membrane. In terms of biological role, negative regulator of hepatic phosphatidylinositol 3-kinase (PI3K) activity. The sequence is that of Phosphoinositide-3-kinase-interacting protein 1 (pik3ip1) from Danio rerio (Zebrafish).